The chain runs to 315 residues: Probable cell division protein WhiA (315 aa).

The segment at residues serine 277–glutamine 311 is a DNA-binding region (H-T-H motif).

The protein belongs to the WhiA family.

Its function is as follows. Involved in cell division and chromosome segregation. The polypeptide is Probable cell division protein WhiA (Lacticaseibacillus paracasei (strain ATCC 334 / BCRC 17002 / CCUG 31169 / CIP 107868 / KCTC 3260 / NRRL B-441) (Lactobacillus paracasei)).